Reading from the N-terminus, the 393-residue chain is S-adenosylmethionine synthase (393 aa).

Residue Glu-9 coordinates Mg(2+). His-15 provides a ligand contact to ATP. Residue Glu-43 participates in K(+) binding. Glu-56 and Gln-99 together coordinate L-methionine. ATP contacts are provided by residues 167 to 169 (DGK), 235 to 238 (SGRF), Asp-246, 252 to 253 (RK), Ala-269, Lys-273, and Lys-277. Asp-246 is an L-methionine binding site. Lys-277 is an L-methionine binding site.

Belongs to the AdoMet synthase family. In terms of assembly, homotetramer. It depends on Mn(2+) as a cofactor. Requires Mg(2+) as cofactor. Co(2+) is required as a cofactor. The cofactor is K(+).

The protein localises to the cytoplasm. The catalysed reaction is L-methionine + ATP + H2O = S-adenosyl-L-methionine + phosphate + diphosphate. It functions in the pathway amino-acid biosynthesis; S-adenosyl-L-methionine biosynthesis; S-adenosyl-L-methionine from L-methionine: step 1/1. Catalyzes the formation of S-adenosylmethionine from methionine and ATP. The reaction comprises two steps that are both catalyzed by the same enzyme: formation of S-adenosylmethionine (AdoMet) and triphosphate, and subsequent hydrolysis of the triphosphate. This is S-adenosylmethionine synthase (SAMS) from Gossypium hirsutum (Upland cotton).